Consider the following 430-residue polypeptide: Tyrosine--tRNA ligase (430 aa).

Residue Tyr32 coordinates L-tyrosine. Residues 37 to 46 (PTADSLHIGH) carry the 'HIGH' region motif. L-tyrosine contacts are provided by Tyr172 and Gln176. The 'KMSKS' region motif lies at 232–236 (KFGKT). Lys235 provides a ligand contact to ATP. The S4 RNA-binding domain occupies 362–429 (VKAVDLFVDN…GKKNYYLIIA (68 aa)).

Belongs to the class-I aminoacyl-tRNA synthetase family. TyrS type 1 subfamily. In terms of assembly, homodimer.

Its subcellular location is the cytoplasm. It catalyses the reaction tRNA(Tyr) + L-tyrosine + ATP = L-tyrosyl-tRNA(Tyr) + AMP + diphosphate + H(+). Its function is as follows. Catalyzes the attachment of tyrosine to tRNA(Tyr) in a two-step reaction: tyrosine is first activated by ATP to form Tyr-AMP and then transferred to the acceptor end of tRNA(Tyr). The sequence is that of Tyrosine--tRNA ligase from Bacteroides fragilis (strain ATCC 25285 / DSM 2151 / CCUG 4856 / JCM 11019 / LMG 10263 / NCTC 9343 / Onslow / VPI 2553 / EN-2).